Here is a 218-residue protein sequence, read N- to C-terminus: ADP-sugar pyrophosphatase (218 aa).

An N-acetylmethionine modification is found at methionine 1. Residue serine 10 is modified to Phosphoserine. Tryptophan 27 is a binding site for substrate. Lysine 41 participates in a covalent cross-link: Glycyl lysine isopeptide (Lys-Gly) (interchain with G-Cter in SUMO2). Threonine 44 is modified (phosphothreonine). Residues tryptophan 45–glutamate 46 and arginine 83 contribute to the substrate site. Positions lysine 56–valine 196 constitute a Nudix hydrolase domain. Alanine 95 contributes to the Mg(2+) binding site. The short motif at glycine 96–glycine 117 is the Nudix box element. Phenylalanine 97 contacts substrate. Mg(2+)-binding residues include glutamate 111 and glutamate 115. Aspartate 132 serves as a coordination point for substrate. Glutamate 165 lines the Mg(2+) pocket. N6-acetyllysine is present on residues lysine 209 and lysine 217.

This sequence belongs to the Nudix hydrolase family. As to quaternary structure, homodimer. Interacts with PARG. The cofactor is Mg(2+). Phosphorylation at Thr-44 is required for homodimer stability; dephosphorylation results in destabilization of the homodimer. Dephosphorylation at Thr-44 promotes the ATP-synthesis activity. As to expression, widely expressed. Most abundant in liver.

The protein resides in the nucleus. It catalyses the reaction D-ribose 5-phosphate + ATP + H(+) = ADP-D-ribose + diphosphate. The enzyme catalyses ADP-D-ribose + H2O = D-ribose 5-phosphate + AMP + 2 H(+). The catalysed reaction is 8-oxo-dGDP + H2O = 8-oxo-dGMP + phosphate + H(+). In terms of biological role, enzyme that can either act as an ADP-sugar pyrophosphatase in absence of diphosphate or catalyze the synthesis of ATP in presence of diphosphate. In absence of diphosphate, hydrolyzes with similar activities various modified nucleoside diphosphates such as ADP-ribose, ADP-mannose, ADP-glucose, 8-oxo-GDP and 8-oxo-dGDP. Can also hydrolyze other nucleotide sugars with low activity. In presence of diphosphate, mediates the synthesis of ATP in the nucleus by catalyzing the conversion of ADP-ribose to ATP and ribose 5-phosphate. Nuclear ATP synthesis takes place when dephosphorylated at Thr-44. Nuclear ATP generation is required for extensive chromatin remodeling events that are energy-consuming. Does not play a role in U8 snoRNA decapping activity. Binds U8 snoRNA. This chain is ADP-sugar pyrophosphatase, found in Mus musculus (Mouse).